The following is a 445-amino-acid chain: Cytochrome b (445 aa).

Residues 2-49 (SGIPHDHYEPRTGIEKWLHSRLPIVALAYDTIMIPTPRNLNWMWIWGV) lie on the Cytoplasmic side of the membrane. Residues 50-67 (VLAFCLVLQIVTGIVLAM) form a helical membrane-spanning segment. The Periplasmic portion of the chain corresponds to 68–94 (HYTPHVDLAFASVEHIMRNVNGGFMLR). Residues 95 to 113 (YLHANGASLFFIAVYLHIF) form a helical membrane-spanning segment. Residues H97 and H111 each coordinate heme b. Residues 114-129 (RGLYYGSYKAPREVTW) are Cytoplasmic-facing. A helical transmembrane segment spans residues 130–149 (IVGMLIYLAMMATAFMGYVL). Residues 150 to 193 (PWGQMSFWGATVITGLFGAIPGIGHSIQTWLLGGPAVDNATLNR) are Periplasmic-facing. A helical transmembrane segment spans residues 194 to 216 (FFSLHYLLPFVIAALVAIHIWAF). Residues H198 and H212 each contribute to the heme b site. Topologically, residues 217–252 (HSTGNNNPTGVEVRRTSKAEAQKDTVPFWPYFIIKD) are cytoplasmic. A helical membrane pass occupies residues 253 to 270 (VFALAVVLLVFFAIVGFM). Over 271 to 329 (PNYLGHPDNYIEANPLSTPAHIVPEWYFLPFYAILRAFTADVWVVQIANFISFGIIDAK) the chain is Periplasmic. The helical transmembrane segment at 330–346 (FFGVLAMFGAILVMALV) threads the bilayer. The Cytoplasmic segment spans residues 347 to 364 (PWLDTSPVRSGRYRPMFK). The chain crosses the membrane as a helical span at residues 365–382 (IYFWLLAADFVILTWVGA). Topologically, residues 383-388 (QQTTFP) are periplasmic. A helical transmembrane segment spans residues 389 to 408 (YDWISLIASAYWFAYFLVIL). Topologically, residues 409–445 (PILGAIEKPVAPPATIEEDFNAHYSPATGGTKTVVAE) are cytoplasmic.

The protein belongs to the cytochrome b family. The main subunits of complex b-c1 are: cytochrome b, cytochrome c1 and the Rieske protein. Heme b serves as cofactor.

The protein localises to the cell membrane. Component of the ubiquinol-cytochrome c reductase complex (complex III or cytochrome b-c1 complex), which is a respiratory chain that generates an electrochemical potential coupled to ATP synthesis. In Cereibacter sphaeroides (Rhodobacter sphaeroides), this protein is Cytochrome b (petB).